The following is a 102-amino-acid chain: Small ribosomal subunit protein uS10 (102 aa).

This sequence belongs to the universal ribosomal protein uS10 family. In terms of assembly, part of the 30S ribosomal subunit.

Its function is as follows. Involved in the binding of tRNA to the ribosomes. The sequence is that of Small ribosomal subunit protein uS10 from Lactobacillus helveticus (strain DPC 4571).